Reading from the N-terminus, the 1857-residue chain is Phosphatidylinositol 3-kinase 2 (1857 aa).

2 stretches are compositionally biased toward low complexity: residues methionine 1 to serine 32 and asparagine 42 to serine 55. 5 disordered regions span residues methionine 1 to threonine 61, threonine 145 to valine 313, serine 348 to arginine 468, isoleucine 481 to valine 512, and glutamate 530 to valine 573. Residues threonine 145 to isoleucine 155 are compositionally biased toward polar residues. Residues asparagine 162–serine 269 are compositionally biased toward low complexity. The segment covering glycine 270–glutamine 281 has biased composition (polar residues). Low complexity-rich tracts occupy residues threonine 288–asparagine 311 and leucine 352–asparagine 464. Residues isoleucine 533–serine 560 are compositionally biased toward low complexity. Positions isoleucine 561 to glycine 570 are enriched in gly residues. One can recognise a PI3K-RBD domain in the interval proline 821 to asparagine 934. Residues lysine 996 to proline 1078 are disordered. A compositionally biased stretch (basic and acidic residues) spans glutamate 997–aspartate 1011. The span at serine 1012–asparagine 1056 shows a compositional bias: low complexity. A C2 PI3K-type domain is found at valine 1099–glutamate 1271. Positions proline 1326–serine 1503 constitute a PIK helical domain. Positions isoleucine 1568–threonine 1845 constitute a PI3K/PI4K catalytic domain. The G-loop stretch occupies residues tyrosine 1574–leucine 1580. The tract at residues glycine 1711–asparagine 1719 is catalytic loop. The tract at residues histidine 1730–threonine 1756 is activation loop.

The protein belongs to the PI3/PI4-kinase family.

The enzyme catalyses a 1,2-diacyl-sn-glycero-3-phospho-(1D-myo-inositol) + ATP = a 1,2-diacyl-sn-glycero-3-phospho-(1D-myo-inositol-3-phosphate) + ADP + H(+). The polypeptide is Phosphatidylinositol 3-kinase 2 (pikB) (Dictyostelium discoideum (Social amoeba)).